We begin with the raw amino-acid sequence, 271 residues long: Putative pyruvate, phosphate dikinase regulatory protein 1 (271 aa).

156–163 (GVSRTSKT) is a binding site for ADP.

The protein belongs to the pyruvate, phosphate/water dikinase regulatory protein family. PDRP subfamily.

It carries out the reaction N(tele)-phospho-L-histidyl/L-threonyl-[pyruvate, phosphate dikinase] + ADP = N(tele)-phospho-L-histidyl/O-phospho-L-threonyl-[pyruvate, phosphate dikinase] + AMP + H(+). It catalyses the reaction N(tele)-phospho-L-histidyl/O-phospho-L-threonyl-[pyruvate, phosphate dikinase] + phosphate + H(+) = N(tele)-phospho-L-histidyl/L-threonyl-[pyruvate, phosphate dikinase] + diphosphate. Bifunctional serine/threonine kinase and phosphorylase involved in the regulation of the pyruvate, phosphate dikinase (PPDK) by catalyzing its phosphorylation/dephosphorylation. In Staphylococcus saprophyticus subsp. saprophyticus (strain ATCC 15305 / DSM 20229 / NCIMB 8711 / NCTC 7292 / S-41), this protein is Putative pyruvate, phosphate dikinase regulatory protein 1.